Reading from the N-terminus, the 124-residue chain is Small ribosomal subunit protein uS12c (124 aa).

It belongs to the universal ribosomal protein uS12 family. Part of the 30S ribosomal subunit.

The protein localises to the plastid. It localises to the chloroplast. With S4 and S5 plays an important role in translational accuracy. Located at the interface of the 30S and 50S subunits. The polypeptide is Small ribosomal subunit protein uS12c (rps12) (Oryza nivara (Indian wild rice)).